Consider the following 559-residue polypeptide: DNA primase (559 aa).

The CHC2-type zinc finger occupies 37 to 61 (CPFHEERSASFSVNQIKGFYHCFGC). In terms of domain architecture, Toprim spans 246-327 (KQVIVTEGYL…RGGVILFENN (82 aa)). Mg(2+) is bound by residues Glu252, Asp296, and Asp298.

It belongs to the DnaG primase family. Monomer. The C-terminal domain DnaB-binding domain exists as a dimer in solution. Interacts with DnaB via its C-terminal domain (residues 415-559 of DnaG); up to 3 DnaG fragments bind to a DnaB hexamer. Zn(2+) is required as a cofactor. Requires Mg(2+) as cofactor.

The enzyme catalyses ssDNA + n NTP = ssDNA/pppN(pN)n-1 hybrid + (n-1) diphosphate.. Functionally, RNA polymerase that catalyzes the synthesis of short RNA molecules used as primers for DNA polymerase during DNA replication. Stimulates the 5'-3' DNA helicase activity of DnaB. This chain is DNA primase, found in Helicobacter pylori (strain ATCC 700392 / 26695) (Campylobacter pylori).